The following is a 160-amino-acid chain: Glucan endo-1,3-beta-glucosidase, acidic isoform PR-O (160 aa).

Residue glutamate 81 is the Nucleophile of the active site.

Belongs to the glycosyl hydrolase 17 family. The N-terminus is blocked.

The protein resides in the secreted. The protein localises to the extracellular space. It carries out the reaction Hydrolysis of (1-&gt;3)-beta-D-glucosidic linkages in (1-&gt;3)-beta-D-glucans.. Functionally, implicated in the defense of plants against pathogens. The polypeptide is Glucan endo-1,3-beta-glucosidase, acidic isoform PR-O (PR0) (Nicotiana tabacum (Common tobacco)).